Consider the following 114-residue polypeptide: MQQLITEITKGQLKTDLPSFRPGDTLRVHVKVVEGTRERIQLFEGVVIKRRGGGISETFTVRKISYGVGVERTFPVHTPRIANIEVLRRGKVRRAKLYYLRNLRGKKARIKEIR.

It belongs to the bacterial ribosomal protein bL19 family.

In terms of biological role, this protein is located at the 30S-50S ribosomal subunit interface and may play a role in the structure and function of the aminoacyl-tRNA binding site. This is Large ribosomal subunit protein bL19 from Bacillus mycoides (strain KBAB4) (Bacillus weihenstephanensis).